Consider the following 173-residue polypeptide: Ribosome maturation factor RimM (173 aa).

The PRC barrel domain maps to 98-170 (EDEYYWCDLL…RMTVSLPEGL (73 aa)).

This sequence belongs to the RimM family. In terms of assembly, binds ribosomal protein uS19.

The protein localises to the cytoplasm. In terms of biological role, an accessory protein needed during the final step in the assembly of 30S ribosomal subunit, possibly for assembly of the head region. Essential for efficient processing of 16S rRNA. May be needed both before and after RbfA during the maturation of 16S rRNA. It has affinity for free ribosomal 30S subunits but not for 70S ribosomes. The chain is Ribosome maturation factor RimM from Geotalea uraniireducens (strain Rf4) (Geobacter uraniireducens).